Reading from the N-terminus, the 71-residue chain is MPIIKVRENEPFDVALRRFKRSCEKAGILSEVRRREFYEKPTTERKRAKASAIKRHIKKINREQLKKSRSF.

This sequence belongs to the bacterial ribosomal protein bS21 family.

The protein is Small ribosomal subunit protein bS21 of Blochmanniella floridana.